We begin with the raw amino-acid sequence, 207 residues long: Peptidyl-tRNA hydrolase (207 aa).

Position 14 (Tyr-14) interacts with tRNA. The active-site Proton acceptor is His-19. TRNA-binding residues include Phe-68, Asn-70, and Asn-116.

The protein belongs to the PTH family. Monomer.

Its subcellular location is the cytoplasm. It catalyses the reaction an N-acyl-L-alpha-aminoacyl-tRNA + H2O = an N-acyl-L-amino acid + a tRNA + H(+). Its function is as follows. Hydrolyzes ribosome-free peptidyl-tRNAs (with 1 or more amino acids incorporated), which drop off the ribosome during protein synthesis, or as a result of ribosome stalling. In terms of biological role, catalyzes the release of premature peptidyl moieties from peptidyl-tRNA molecules trapped in stalled 50S ribosomal subunits, and thus maintains levels of free tRNAs and 50S ribosomes. This chain is Peptidyl-tRNA hydrolase, found in Hyphomonas neptunium (strain ATCC 15444).